Here is a 109-residue protein sequence, read N- to C-terminus: Large ribosomal subunit protein uL24 (109 aa).

Belongs to the universal ribosomal protein uL24 family. As to quaternary structure, part of the 50S ribosomal subunit.

Its function is as follows. One of two assembly initiator proteins, it binds directly to the 5'-end of the 23S rRNA, where it nucleates assembly of the 50S subunit. In terms of biological role, one of the proteins that surrounds the polypeptide exit tunnel on the outside of the subunit. The chain is Large ribosomal subunit protein uL24 from Rickettsia bellii (strain RML369-C).